The following is a 243-amino-acid chain: Venom nerve growth factor 3 (243 aa).

The signal sequence occupies residues 1–18 (MSMLCYTLIIAFLIGIWA). A propeptide spanning residues 19–125 (APKSEDNVPL…ALNRNIRAKR (107 aa)) is cleaved from the precursor. The span at 47-66 (GLKTSRNTDQRHPAPKKAED) shows a compositional bias: basic and acidic residues. The segment at 47–67 (GLKTSRNTDQRHPAPKKAEDQ) is disordered. Intrachain disulfides connect Cys-139–Cys-204, Cys-182–Cys-232, and Cys-192–Cys-234. 2 N-linked (GlcNAc...) asparagine glycosylation sites follow: Asn-148 and Asn-151.

It belongs to the NGF-beta family. Homodimer; non-covalently linked. Expressed by the venom gland.

Its subcellular location is the secreted. In terms of biological role, nerve growth factor is important for the development and maintenance of the sympathetic and sensory nervous systems. It stimulates division and differentiation of sympathetic and embryonic sensory neurons as well as basal forebrain cholinergic neurons in the brain. Its relevance in the snake venom is not clear. However, it has been shown to inhibit metalloproteinase-dependent proteolysis of platelet glycoprotein Ib alpha, suggesting a metalloproteinase inhibition to prevent metalloprotease autodigestion and/or protection against prey proteases. Binds a lipid between the two protein chains in the homodimer. The lipid-bound form promotes histamine relase from mouse mast cells, contrary to the lipid-free form. The protein is Venom nerve growth factor 3 of Tropidechis carinatus (Australian rough-scaled snake).